A 141-amino-acid chain; its full sequence is Putative 8-oxo-dGTP diphosphatase 2 (141 aa).

Positions 2–131 (LNQIVVAGAI…WIADLARTLN (130 aa)) constitute a Nudix hydrolase domain. Positions 37, 52, 55, and 56 each coordinate Mg(2+). The short motif at 37–58 (GKVAAGETERAALARELAEELG) is the Nudix box element.

It belongs to the Nudix hydrolase family. It depends on Mg(2+) as a cofactor. Mn(2+) is required as a cofactor.

The enzyme catalyses 8-oxo-dGTP + H2O = 8-oxo-dGMP + diphosphate + H(+). Functionally, may be involved in the GO system responsible for removing an oxidatively damaged form of guanine (7,8-dihydro-8-oxoguanine, 8-oxo-dGTP) from DNA and the nucleotide pool. 8-oxo-dGTP is inserted opposite dA and dC residues of template DNA with almost equal efficiency thus leading to A.T to G.C transversions. MutT specifically degrades 8-oxo-dGTP to the monophosphate. This Mycobacterium tuberculosis (strain CDC 1551 / Oshkosh) protein is Putative 8-oxo-dGTP diphosphatase 2 (mutT2).